The following is a 359-amino-acid chain: 3-dehydroquinate synthase (359 aa).

NAD(+) contacts are provided by residues 106–110 (GVVGD), 130–131 (TS), Lys143, and Lys152. Residues Glu185, His246, and His262 each coordinate Zn(2+).

The protein belongs to the sugar phosphate cyclases superfamily. Dehydroquinate synthase family. NAD(+) serves as cofactor. The cofactor is Co(2+). Zn(2+) is required as a cofactor.

It localises to the cytoplasm. It carries out the reaction 7-phospho-2-dehydro-3-deoxy-D-arabino-heptonate = 3-dehydroquinate + phosphate. It functions in the pathway metabolic intermediate biosynthesis; chorismate biosynthesis; chorismate from D-erythrose 4-phosphate and phosphoenolpyruvate: step 2/7. In terms of biological role, catalyzes the conversion of 3-deoxy-D-arabino-heptulosonate 7-phosphate (DAHP) to dehydroquinate (DHQ). The chain is 3-dehydroquinate synthase from Lactiplantibacillus plantarum (strain ATCC BAA-793 / NCIMB 8826 / WCFS1) (Lactobacillus plantarum).